Consider the following 379-residue polypeptide: Cytochrome b (379 aa).

A run of 4 helical transmembrane segments spans residues 33–53 (FGSL…FLAM), 77–98 (WLIR…YLHI), 113–133 (WNIG…GYVL), and 178–198 (FFAF…IHLL). Heme b is bound by residues His-83 and His-97. The heme b site is built by His-182 and His-196. His-201 is a binding site for a ubiquinone. Transmembrane regions (helical) follow at residues 226 to 246 (YKDL…ALFY), 288 to 308 (LGGV…PILH), 320 to 340 (ASQL…WIGG), and 347 to 367 (YIII…VLNP).

It belongs to the cytochrome b family. In terms of assembly, the cytochrome bc1 complex contains 3 respiratory subunits (MT-CYB, CYC1 and UQCRFS1), 2 core proteins (UQCRC1 and UQCRC2) and probably 6 low-molecular weight proteins. Heme b is required as a cofactor.

It is found in the mitochondrion inner membrane. Component of the ubiquinol-cytochrome c reductase complex (complex III or cytochrome b-c1 complex) that is part of the mitochondrial respiratory chain. The b-c1 complex mediates electron transfer from ubiquinol to cytochrome c. Contributes to the generation of a proton gradient across the mitochondrial membrane that is then used for ATP synthesis. The protein is Cytochrome b (mt-cyb) of Anguilla dieffenbachii (New Zealand longfin eel).